The chain runs to 485 residues: Portal protein (485 aa).

The interval 456–485 (MVDADPTVPGSPNPTPAPKPQPAIEGGDSA) is disordered. The span at 464–476 (PGSPNPTPAPKPQ) shows a compositional bias: pro residues.

The protein belongs to the SPP1-like portal protein family. As to quaternary structure, homododecamer.

The protein localises to the virion. Forms the portal vertex of the capsid. This portal plays critical roles in head assembly, genome packaging, neck/tail attachment, and genome ejection. The portal protein multimerizes as a single ring-shaped homododecamer arranged around a central channel. Binds to the terminase subunits to form the packaging machine. This chain is Portal protein (14), found in Mycobacterium (Mycobacteriophage D29).